Reading from the N-terminus, the 381-residue chain is Glycerol-3-phosphate dehydrogenase [NAD(+)] (381 aa).

A disordered region spans residues 1–27; that stretch reads MTAMDRLDHVSNQLAAKRQKKNPEGKP. Residues 34–39, Phe66, and Phe122 contribute to the NAD(+) site; that span reads GSGNWG. Lys145 is a substrate binding site. Ala178 serves as a coordination point for NAD(+). Lys238 functions as the Proton acceptor in the catalytic mechanism. NAD(+) is bound by residues Arg303 and Gln332. Position 303 to 304 (303 to 304) interacts with substrate; the sequence is RN.

This sequence belongs to the NAD-dependent glycerol-3-phosphate dehydrogenase family.

It carries out the reaction sn-glycerol 3-phosphate + NAD(+) = dihydroxyacetone phosphate + NADH + H(+). The protein is Glycerol-3-phosphate dehydrogenase [NAD(+)] (GPD) of Pichia angusta (Yeast).